Reading from the N-terminus, the 101-residue chain is MARKSLSSRQARREGLVARYADRRAELKRLVTHPDTDLSARDDAVRRLSRLPRDSSRVRLRNRDVIDGRPRGVLSRFGLSRVRFREMALRGELPGVRKASW.

The protein belongs to the universal ribosomal protein uS14 family. In terms of assembly, part of the 30S ribosomal subunit. Contacts proteins S3 and S10.

Its function is as follows. Binds 16S rRNA, required for the assembly of 30S particles and may also be responsible for determining the conformation of the 16S rRNA at the A site. The sequence is that of Small ribosomal subunit protein uS14A from Salinispora arenicola (strain CNS-205).